The sequence spans 61 residues: Alpha-conotoxine-like Am1.3 (61 aa).

The first 21 residues, 1–21, serve as a signal peptide directing secretion; the sequence is MGMRMMFTVFLLVVLATTVVS. Residues 22 to 44 constitute a propeptide that is removed on maturation; sequence FMSGRASHGRNAAASDLIALTIK. Cys60 is subject to Cysteine amide.

Belongs to the conotoxin A superfamily. Post-translationally, is not hydroxylated. Contains 2 disulfide bonds. As to expression, expressed by the venom duct.

The protein localises to the secreted. Alpha-conotoxins act on postsynaptic membranes, they bind to the nicotinic acetylcholine receptors (nAChR) and thus inhibit them. This Conus amadis (Amadis cone) protein is Alpha-conotoxine-like Am1.3.